Here is a 1179-residue protein sequence, read N- to C-terminus: Stress response protein NST1 (1179 aa).

7 disordered regions span residues 1–64 (MSET…LNDP), 147–189 (TVNT…SNSS), 255–351 (KRQQ…NHSH), 537–619 (AAWI…EEEK), 660–819 (EAEE…DISQ), 928–947 (SSQA…PQLS), and 957–997 (SLSQ…VWNP). The span at 10–22 (DVSKFKNGDDVHF) shows a compositional bias: basic and acidic residues. Residues 24–38 (YNSTTNDQTINSTNV) are compositionally biased toward polar residues. Positions 39 to 53 (QKKKKKKKSKNKHKG) are enriched in basic residues. Residues 149–178 (NTSNNHQNNSNTQGGSTSTSGGALNGSSTN) are compositionally biased toward low complexity. The span at 262–278 (YKQERDAHHDHHNHEPG) shows a compositional bias: basic and acidic residues. A compositionally biased stretch (low complexity) spans 282–299 (SDTGSSGDYDGSTQQDQQ). Basic and acidic residues predominate over residues 300 to 347 (HQYEHEIEHAFQEDEHEDECGHKNDHSHSHSHSHTENHNHSHSYDPNH). The segment covering 564 to 616 (ELEEELNDEYDEVDEDDDEGEEEGEEEEEELDDEEFEEDEEEDASDTESEISE) has biased composition (acidic residues). The stretch at 648 to 810 (SQDRTRTLIE…KSAKKQDHKE (163 aa)) forms a coiled coil. Basic and acidic residues-rich tracts occupy residues 663–681 (ENAK…EKAK) and 690–812 (AKEE…KETG). Residues 957-977 (SLSQNSLSSNANENLNTNPLN) are compositionally biased toward low complexity.

Belongs to the NST1 family.

The protein resides in the cytoplasm. Functionally, may act as a negative regulator of salt tolerance. This is Stress response protein NST1 (NST1) from Debaryomyces hansenii (strain ATCC 36239 / CBS 767 / BCRC 21394 / JCM 1990 / NBRC 0083 / IGC 2968) (Yeast).